A 371-amino-acid polypeptide reads, in one-letter code: Queuine tRNA-ribosyltransferase (371 aa).

Asp-89 functions as the Proton acceptor in the catalytic mechanism. Residues 89–93 (DSGGF), Asp-143, Gln-185, and Gly-212 each bind substrate. The interval 243–249 (GVGTPED) is RNA binding. The active-site Nucleophile is Asp-262. The segment at 267-271 (TRNAR) is RNA binding; important for wobble base 34 recognition. Zn(2+)-binding residues include Cys-300, Cys-302, Cys-305, and His-331.

It belongs to the queuine tRNA-ribosyltransferase family. As to quaternary structure, homodimer. Within each dimer, one monomer is responsible for RNA recognition and catalysis, while the other monomer binds to the replacement base PreQ1. Requires Zn(2+) as cofactor.

It carries out the reaction 7-aminomethyl-7-carbaguanine + guanosine(34) in tRNA = 7-aminomethyl-7-carbaguanosine(34) in tRNA + guanine. It functions in the pathway tRNA modification; tRNA-queuosine biosynthesis. Catalyzes the base-exchange of a guanine (G) residue with the queuine precursor 7-aminomethyl-7-deazaguanine (PreQ1) at position 34 (anticodon wobble position) in tRNAs with GU(N) anticodons (tRNA-Asp, -Asn, -His and -Tyr). Catalysis occurs through a double-displacement mechanism. The nucleophile active site attacks the C1' of nucleotide 34 to detach the guanine base from the RNA, forming a covalent enzyme-RNA intermediate. The proton acceptor active site deprotonates the incoming PreQ1, allowing a nucleophilic attack on the C1' of the ribose to form the product. After dissociation, two additional enzymatic reactions on the tRNA convert PreQ1 to queuine (Q), resulting in the hypermodified nucleoside queuosine (7-(((4,5-cis-dihydroxy-2-cyclopenten-1-yl)amino)methyl)-7-deazaguanosine). The chain is Queuine tRNA-ribosyltransferase from Nitrosomonas europaea (strain ATCC 19718 / CIP 103999 / KCTC 2705 / NBRC 14298).